The chain runs to 330 residues: BTB/POZ domain-containing adapter for CUL3-mediated RhoA degradation protein 1 (330 aa).

The tract at residues 1–34 (MSAEASGSSGGHAVTVSGSSPSSSSHVGEEKPGR) is disordered. A BTB domain is found at 40–108 (KYVKLNVGGT…LRDGTVPLPD (69 aa)). Positions 282-291 (GGVSSSGAGQ) are enriched in low complexity. The tract at residues 282 to 304 (GGVSSSGAGQSEEEGAGAGGGDR) is disordered.

The protein belongs to the BACURD family.

The protein localises to the nucleus. Functionally, substrate-specific adapter of a BCR (BTB-CUL3-RBX1) E3 ubiquitin-protein ligase complex required for synaptic transmission. The BCR(KCTD13) E3 ubiquitin ligase complex mediates the ubiquitination of RHOA, leading to its degradation by the proteasome, thereby regulating the actin cytoskeleton and promoting synaptic transmission. The chain is BTB/POZ domain-containing adapter for CUL3-mediated RhoA degradation protein 1 from Danio rerio (Zebrafish).